The sequence spans 175 residues: Early E1A protein (175 aa).

The interaction with RB1 in competition with E2F1 stretch occupies residues 40–48 (PSLHDLFDL). Positions 106–110 (LLCLE) match the LXCXE motif, interaction with host RB1 motif. A zinc finger spans residues 146-164 (CLRCAYYQEQGENSICGLC).

It belongs to the adenoviridae E1A protein family. As to quaternary structure, interacts with host UBE2I; this interaction interferes with polySUMOylation. Interacts with host RB1; this interaction induces the aberrant dissociation of RB1-E2F1 complex thereby disrupting the activity of RB1 and activating E2F1-regulated genes. Interacts with host ATF7; the interaction enhances ATF7-mediated viral transactivation activity which requires the zinc binding domains of both proteins. Isoform early E1A 32 kDa protein and isoform early E1A 26 kDa protein interact (via N-terminus) with CUL1 and E3 ubiquitin ligase RBX1; these interactions inhibit RBX1-CUL1-dependent elongation reaction of ubiquitin chains and attenuate ubiquitination of SCF(FBXW7) target proteins. Interacts (via PXLXP motif) with host ZMYND11/BS69 (via MYND-type zinc finger); this interaction inhibits E1A mediated transactivation. Interacts with host EP300; this interaction stimulates the acetylation of RB1 by recruiting EP300 and RB1 into a multimeric-protein complex. Interacts with host CTBP1 and CTBP2; this interaction seems to potentiate viral replication. Interacts with host DCAF7. Interacts with host DYRK1A. Interacts with host KPNA4; this interaction allows E1A import into the host nucleus. Interacts with host EP400; this interaction stabilizes MYC. Interacts with host TBP protein; this interaction probably disrupts the TBP-TATA complex.

It localises to the host nucleus. Functionally, plays a role in viral genome replication by driving entry of quiescent cells into the cell cycle. Stimulation of progression from G1 to S phase allows the virus to efficiently use the cellular DNA replicating machinery to achieve viral genome replication. E1A protein has both transforming and trans-activating activities. Induces the disassembly of the E2F1 transcription factor from RB1 by direct competition for the same binding site on RB1, with subsequent transcriptional activation of E2F1-regulated S-phase genes and of the E2 region of the adenoviral genome. Release of E2F1 leads to the ARF-mediated inhibition of MDM2 and causes TP53/p53 to accumulate because it is not targeted for degradation by MDM2-mediated ubiquitination anymore. This increase in TP53, in turn, would arrest the cell proliferation and direct its death but this effect is counteracted by the viral protein E1B-55K. Inactivation of the ability of RB1 to arrest the cell cycle is critical for cellular transformation, uncontrolled cellular growth and proliferation induced by viral infection. Interaction with RBX1 and CUL1 inhibits ubiquitination of the proteins targeted by SCF(FBXW7) ubiquitin ligase complex, and may be linked to unregulated host cell proliferation. The tumorigenesis-restraining activity of E1A may be related to the disruption of the host CtBP-CtIP complex through the CtBP binding motif. The protein is Early E1A protein of Canis lupus familiaris (Dog).